The primary structure comprises 211 residues: Protein-L-isoaspartate O-methyltransferase (211 aa).

The active site involves Ser62.

Belongs to the methyltransferase superfamily. L-isoaspartyl/D-aspartyl protein methyltransferase family.

The protein resides in the cytoplasm. The enzyme catalyses [protein]-L-isoaspartate + S-adenosyl-L-methionine = [protein]-L-isoaspartate alpha-methyl ester + S-adenosyl-L-homocysteine. Its function is as follows. Catalyzes the methyl esterification of L-isoaspartyl residues in peptides and proteins that result from spontaneous decomposition of normal L-aspartyl and L-asparaginyl residues. It plays a role in the repair and/or degradation of damaged proteins. The chain is Protein-L-isoaspartate O-methyltransferase from Shewanella putrefaciens (strain CN-32 / ATCC BAA-453).